We begin with the raw amino-acid sequence, 170 residues long: Siroheme decarboxylase NirL subunit (170 aa).

It belongs to the Ahb/Nir family. Probably forms a complex composed of NirD, NirL, NirG and NirH. All proteins are required for the total conversion of siroheme to didecarboxysiroheme.

It carries out the reaction siroheme + 2 H(+) = 12,18-didecarboxysiroheme + 2 CO2. It functions in the pathway porphyrin-containing compound metabolism. Its function is as follows. Involved in heme d1 biosynthesis. Catalyzes the decarboxylation of siroheme into didecarboxysiroheme. In Stutzerimonas stutzeri (Pseudomonas stutzeri), this protein is Siroheme decarboxylase NirL subunit.